A 210-amino-acid chain; its full sequence is N-(5'-phosphoribosyl)anthranilate isomerase (210 aa).

This sequence belongs to the TrpF family.

It catalyses the reaction N-(5-phospho-beta-D-ribosyl)anthranilate = 1-(2-carboxyphenylamino)-1-deoxy-D-ribulose 5-phosphate. The protein operates within amino-acid biosynthesis; L-tryptophan biosynthesis; L-tryptophan from chorismate: step 3/5. This is N-(5'-phosphoribosyl)anthranilate isomerase from Staphylococcus aureus (strain MRSA252).